Consider the following 549-residue polypeptide: Maturase K (549 aa).

It belongs to the intron maturase 2 family. MatK subfamily.

It is found in the plastid. Its subcellular location is the chloroplast. Functionally, usually encoded in the trnK tRNA gene intron. Probably assists in splicing its own and other chloroplast group II introns. In Albidella oligococca (Caldesia oligococca), this protein is Maturase K.